Here is a 705-residue protein sequence, read N- to C-terminus: Glycogen [starch] synthase isoform 2 (705 aa).

R20 is a UDP binding site. S159 is modified (phosphoserine). UDP-alpha-D-glucose is bound by residues H193 and R199. H280, E281, Q283, H286, and K290 together coordinate alpha-D-glucose 6-phosphate. A UDP-binding site is contributed by R320. R320 is a UDP-alpha-D-glucose binding site. Phosphoserine occurs at positions 363 and 467. H500 is a binding site for alpha-D-glucose 6-phosphate. The UDP-alpha-D-glucose site is built by E509, W511, and G512. T514 lines the UDP pocket. Residues R583 and R587 each coordinate alpha-D-glucose 6-phosphate. S651 carries the post-translational modification Phosphoserine. S655 is modified (phosphoserine; by PHO85). A phosphoserine; by PKA mark is found at S661 and S663. At T668 the chain carries Phosphothreonine; by PHO85. The segment at 686–705 (SLGVNPAADDDDDGPYADDS) is disordered. Acidic residues predominate over residues 693–705 (ADDDDDGPYADDS).

It belongs to the glycosyltransferase 3 family. Interacts with PCL10. Post-translationally, phosphorylated by the cyclin-CDK PCL10-PHO85. Phosphorylation causes inactivation of enzyme.

The protein localises to the cytoplasm. It localises to the cytosol. It catalyses the reaction [(1-&gt;4)-alpha-D-glucosyl](n) + UDP-alpha-D-glucose = [(1-&gt;4)-alpha-D-glucosyl](n+1) + UDP + H(+). It participates in glycan biosynthesis; glycogen biosynthesis. Allosteric activation by glucose-6-phosphate, and phosphorylation by a cAMP-dependent kinase. In terms of biological role, glycogen synthase participates in the glycogen biosynthetic process along with glycogenin and glycogen branching enzyme. Extends the primer composed of a few glucose units formed by glycogenin by adding new glucose units to it. In this context, glycogen synthase transfers the glycosyl residue from UDP-Glc to the non-reducing end of alpha-1,4-glucan. This chain is Glycogen [starch] synthase isoform 2 (GSY2), found in Saccharomyces cerevisiae (strain ATCC 204508 / S288c) (Baker's yeast).